The chain runs to 463 residues: L-seryl-tRNA(Sec) selenium transferase (463 aa).

K295 is modified (N6-(pyridoxal phosphate)lysine).

The protein belongs to the SelA family. As to quaternary structure, homodecamer; pentamer of dimers. Binds only one seryl-tRNA(Sec) per dimer. Requires pyridoxal 5'-phosphate as cofactor.

It localises to the cytoplasm. It catalyses the reaction L-seryl-tRNA(Sec) + selenophosphate + H(+) = L-selenocysteinyl-tRNA(Sec) + phosphate. Its pathway is aminoacyl-tRNA biosynthesis; selenocysteinyl-tRNA(Sec) biosynthesis; selenocysteinyl-tRNA(Sec) from L-seryl-tRNA(Sec) (bacterial route): step 1/1. Functionally, converts seryl-tRNA(Sec) to selenocysteinyl-tRNA(Sec) required for selenoprotein biosynthesis. This chain is L-seryl-tRNA(Sec) selenium transferase, found in Escherichia coli O7:K1 (strain IAI39 / ExPEC).